The following is an 886-amino-acid chain: Receptor-like kinase TMK2 (886 aa).

A signal peptide spans 1–20; the sequence is MIAKNFLLLLCFIALVNVES. The Extracellular segment spans residues 21–460; that stretch reads SPDEAVMIAL…GKKASSNAGK (440 aa). N41 carries an N-linked (GlcNAc...) asparagine glycan. C48 and C56 are disulfide-bonded. LRR repeat units follow at residues 59-83, 84-106, 107-129, 131-155, 157-179, 182-206, 208-232, 233-254, 255-279, and 281-302; these read SNRV…LGKL, TSLT…LAGL, KSLV…FFSG, SSLQ…LENA, SLVD…LFEG, FSSL…FSDS, VQVL…LQKM, TSLT…DFSG, LVSL…LFEL, and SLSD…FTAP. N-linked (GlcNAc...) asparagine glycans are attached at residues N154, N167, and N202. Residue N237 is glycosylated (N-linked (GlcNAc...) asparagine). N-linked (GlcNAc...) asparagine glycosylation occurs at N298. 2 cysteine pairs are disulfide-bonded: C315–C323 and C353–C361. LRR repeat units follow at residues 363–386, 387–410, and 411–438; these read GTDI…RFAD, FASL…ELAK, and LSNL…IVNT. N-linked (GlcNAc...) asparagine glycosylation is found at N377, N394, N401, N432, and N437. The chain crosses the membrane as a helical span at residues 461–481; that stretch reads IVGSVIGILLALLLIGVAIFF. The Cytoplasmic portion of the chain corresponds to 482-886; the sequence is LVKKKMQYHK…ESTFKSGQGR (405 aa). Positions 547–827 constitute a Protein kinase domain; it reads FDEKNILGRG…HVVNVLVSLV (281 aa). ATP contacts are provided by residues 553-561 and K575; that span reads LGRGGFGIV. The Proton acceptor role is filled by D676.

The protein belongs to the protein kinase superfamily. Ser/Thr protein kinase family. In terms of tissue distribution, expressed in siliques and flowers.

It localises to the membrane. It catalyses the reaction L-seryl-[protein] + ATP = O-phospho-L-seryl-[protein] + ADP + H(+). It carries out the reaction L-threonyl-[protein] + ATP = O-phospho-L-threonyl-[protein] + ADP + H(+). Involved in auxin signal transduction and cell expansion and proliferation regulation. The chain is Receptor-like kinase TMK2 from Arabidopsis thaliana (Mouse-ear cress).